Reading from the N-terminus, the 122-residue chain is Phosphoribosyl-ATP pyrophosphatase (122 aa).

Belongs to the PRA-PH family.

It localises to the cytoplasm. It catalyses the reaction 1-(5-phospho-beta-D-ribosyl)-ATP + H2O = 1-(5-phospho-beta-D-ribosyl)-5'-AMP + diphosphate + H(+). It participates in amino-acid biosynthesis; L-histidine biosynthesis; L-histidine from 5-phospho-alpha-D-ribose 1-diphosphate: step 2/9. This chain is Phosphoribosyl-ATP pyrophosphatase, found in Burkholderia mallei (strain NCTC 10247).